Consider the following 477-residue polypeptide: Monocarboxylate transporter 12-B (477 aa).

Residues 1–9 are Cytoplasmic-facing; it reads MAQEKKKGG. 12 consecutive transmembrane segments (helical) span residues 10-30, 58-78, 86-106, 116-136, 148-168, 178-198, 253-273, 289-309, 320-340, 344-364, 383-403, and 413-433; these read VLPP…VVTV, AWIH…GSLI, IAVI…SFAT, GLLT…MVGI, IAMS…QLLI, LILG…RPII, FLVL…PFVY, AFLM…FGWL, NICY…IPLL, VWLV…VALI, VVYF…GWLV, and FFLS…VAII. Residues 434–477 are Cytoplasmic-facing; sequence RYCQRNQKKNSLSKIPKLVSCEGKQVDYYPPKNKDLMLIIPATS.

Belongs to the major facilitator superfamily. Monocarboxylate porter (TC 2.A.1.13) family.

Its subcellular location is the cell membrane. It is found in the basolateral cell membrane. The catalysed reaction is creatine(in) = creatine(out). The enzyme catalyses guanidinoacetate(in) = guanidinoacetate(out). In terms of biological role, functions as a transporter for creatine and as well for its precursor guanidinoacetate. Transport of creatine and GAA is independent of resting membrane potential and extracellular Na(+), Cl(-), or pH. Contributes to the process of creatine biosynthesis and distribution. This Danio rerio (Zebrafish) protein is Monocarboxylate transporter 12-B (slc16a12b).